Reading from the N-terminus, the 352-residue chain is Ion-translocating oxidoreductase complex subunit D (352 aa).

The next 4 helical transmembrane spans lie at 20-40, 42-62, 69-91, and 123-143; these read IMLL…WFFG, GTLF…AIVL, VASH…SIPP, and PAMI…TSWL. An FMN phosphoryl threonine modification is found at threonine 187. 5 consecutive transmembrane segments (helical) span residues 215-235, 242-262, 267-287, 301-321, and 322-342; these read LAGV…VFLL, WHIP…GWLF, LASP…FFIL, LIFG…GGYP, and DGVA…DYYT.

The protein belongs to the NqrB/RnfD family. The complex is composed of six subunits: RsxA, RsxB, RsxC, RsxD, RsxE and RsxG. FMN serves as cofactor.

The protein localises to the cell inner membrane. Part of a membrane-bound complex that couples electron transfer with translocation of ions across the membrane. Required to maintain the reduced state of SoxR. This is Ion-translocating oxidoreductase complex subunit D from Salmonella choleraesuis (strain SC-B67).